We begin with the raw amino-acid sequence, 620 residues long: Translation initiation factor IF-2 (620 aa).

The tr-type G domain occupies Glu119–Leu288. The G1 stretch occupies residues Gly128–Thr135. Gly128 to Thr135 is a binding site for GTP. The tract at residues Gly153 to Ala157 is G2. Residues Asp175–Gly178 are G3. Residues Asp175–His179 and Asn229–Asp232 contribute to the GTP site. The tract at residues Asn229–Asp232 is G4. The tract at residues Ser265–Ile267 is G5.

Belongs to the TRAFAC class translation factor GTPase superfamily. Classic translation factor GTPase family. IF-2 subfamily.

The protein resides in the cytoplasm. Its function is as follows. One of the essential components for the initiation of protein synthesis. Protects formylmethionyl-tRNA from spontaneous hydrolysis and promotes its binding to the 30S ribosomal subunits. Also involved in the hydrolysis of GTP during the formation of the 70S ribosomal complex. In Mycoplasma mycoides subsp. mycoides SC (strain CCUG 32753 / NCTC 10114 / PG1), this protein is Translation initiation factor IF-2.